The primary structure comprises 234 residues: 2,3-bisphosphoglycerate-dependent phosphoglycerate mutase 1 (234 aa).

Residues Arg-14–Asn-21, Thr-27–Gly-28, Arg-66, and Glu-93–Tyr-96 each bind substrate. His-15 acts as the Tele-phosphohistidine intermediate in catalysis. Catalysis depends on Glu-93, which acts as the Proton donor/acceptor.

Belongs to the phosphoglycerate mutase family. BPG-dependent PGAM subfamily. As to quaternary structure, homodimer.

It carries out the reaction (2R)-2-phosphoglycerate = (2R)-3-phosphoglycerate. Its pathway is carbohydrate degradation; glycolysis; pyruvate from D-glyceraldehyde 3-phosphate: step 3/5. Functionally, catalyzes the interconversion of 2-phosphoglycerate and 3-phosphoglycerate. The sequence is that of 2,3-bisphosphoglycerate-dependent phosphoglycerate mutase 1 from Nitrosomonas europaea (strain ATCC 19718 / CIP 103999 / KCTC 2705 / NBRC 14298).